We begin with the raw amino-acid sequence, 205 residues long: DNA-directed RNA polymerase RPB5 homolog (205 aa).

This sequence belongs to the archaeal RpoH/eukaryotic RPB5 RNA polymerase subunit family. As to quaternary structure, part of the viral DNA-directed RNA polymerase that consists of 8 polII-like subunits (RPB1, RPB2, RPB3, RPB5, RPB6, RPB7, RPB9, RPB10), a capping enzyme and a termination factor.

Its subcellular location is the host cytoplasm. The protein resides in the virion. Functionally, component of the DNA-directed RNA polymerase (RNAP) that catalyzes the transcription in the cytoplasm of viral DNA into RNA using the four ribonucleoside triphosphates as substrates. The chain is DNA-directed RNA polymerase RPB5 homolog from Ornithodoros (relapsing fever ticks).